Reading from the N-terminus, the 377-residue chain is Alternative oxidase, mitochondrial (377 aa).

Residues 149–169 (LSRFIFLESIAAVPGMVAGML) traverse the membrane as a helical segment. Fe cation-binding residues include Glu156, Glu195, and His198. Residues 214–234 (ILIIGAQGVYFNAMFVAYLIS) form a helical membrane-spanning segment. Positions 246, 303, and 306 each coordinate Fe cation.

This sequence belongs to the alternative oxidase family. The cofactor is Fe cation.

The protein localises to the mitochondrion inner membrane. Functionally, catalyzes cyanide-resistant oxygen consumption. May increase respiration when the cytochrome respiratory pathway is restricted, or in response to low temperatures. The chain is Alternative oxidase, mitochondrial (AOX1) from Pyricularia oryzae (strain 70-15 / ATCC MYA-4617 / FGSC 8958) (Rice blast fungus).